A 347-amino-acid chain; its full sequence is Protein pelota homolog (347 aa).

It belongs to the eukaryotic release factor 1 family. Pelota subfamily. In terms of assembly, monomer. A divalent metal cation serves as cofactor.

It is found in the cytoplasm. In terms of biological role, may function in recognizing stalled ribosomes, interact with stem-loop structures in stalled mRNA molecules, and effect endonucleolytic cleavage of the mRNA. May play a role in the release non-functional ribosomes and degradation of damaged mRNAs. Has endoribonuclease activity. This Methanothrix thermoacetophila (strain DSM 6194 / JCM 14653 / NBRC 101360 / PT) (Methanosaeta thermophila) protein is Protein pelota homolog.